Consider the following 428-residue polypeptide: tRNA modification GTPase MnmE (428 aa).

(6S)-5-formyl-5,6,7,8-tetrahydrofolate contacts are provided by R20, E76, and R116. A TrmE-type G domain is found at 212–351 (GFEVAIIGAP…LVEALQDRLL (140 aa)). N222 is a K(+) binding site. GTP-binding positions include 222-227 (NAGKST), 241-247 (SEVAGTT), and 266-269 (DTAG). S226 is a binding site for Mg(2+). The K(+) site is built by S241, V243, and T246. Position 247 (T247) interacts with Mg(2+). A (6S)-5-formyl-5,6,7,8-tetrahydrofolate-binding site is contributed by K428.

It belongs to the TRAFAC class TrmE-Era-EngA-EngB-Septin-like GTPase superfamily. TrmE GTPase family. As to quaternary structure, homodimer. Heterotetramer of two MnmE and two MnmG subunits. K(+) is required as a cofactor.

The protein resides in the cytoplasm. Exhibits a very high intrinsic GTPase hydrolysis rate. Involved in the addition of a carboxymethylaminomethyl (cmnm) group at the wobble position (U34) of certain tRNAs, forming tRNA-cmnm(5)s(2)U34. The chain is tRNA modification GTPase MnmE from Cereibacter sphaeroides (strain ATCC 17025 / ATH 2.4.3) (Rhodobacter sphaeroides).